Here is a 783-residue protein sequence, read N- to C-terminus: Mitochondrial intermediate peptidase (783 aa).

A mitochondrion-targeting transit peptide spans 1-33; the sequence is MKAGIPLSRCTQRIPLLVARQVSRNITTTTTKF. His-565 contributes to the Zn(2+) binding site. Residue Glu-566 is part of the active site. 2 residues coordinate Zn(2+): His-569 and His-572.

This sequence belongs to the peptidase M3 family. Zn(2+) is required as a cofactor.

The protein localises to the mitochondrion matrix. The enzyme catalyses Release of an N-terminal octapeptide as second stage of processing of some proteins imported into the mitochondrion.. Its function is as follows. Cleaves proteins, imported into the mitochondrion, to their mature size. While most mitochondrial precursor proteins are processed to the mature form in one step by mitochondrial processing peptidase (MPP), the sequential cleavage by MIP of an octapeptide after initial processing by MPP is a required step for a subgroup of nuclear-encoded precursor proteins destined for the matrix or the inner membrane. The chain is Mitochondrial intermediate peptidase (OCT1) from Candida albicans (strain SC5314 / ATCC MYA-2876) (Yeast).